The following is a 613-amino-acid chain: Ethylene response sensor 1 (613 aa).

The next 3 membrane-spanning stretches (helical) occupy residues 23–43 (ISDALIALAYFSIPLELIYFV), 58–78 (FGAFIILCGATHFINLWMFFM), and 95–115 (AVVSCATALMLVHIIPDLLSV). Cys-65 and His-69 together coordinate Cu cation. A GAF domain is found at 158–307 (DRHTILRTTL…NVADQVAVAL (150 aa)). A Histidine kinase domain is found at 350–589 (VMNHEMRTPM…SFIIRLGICN (240 aa)). His-353 is subject to Phosphohistidine; by autocatalysis.

It belongs to the ethylene receptor family. Homodimer; disulfide-linked. Heteromer with ETR1. It depends on Cu cation as a cofactor. Autophosphorylated on both His and Ser residues in the presence of manganese. Loss of His autophosphorylation in the presence of both manganese and magnesium. In terms of tissue distribution, expressed in etiolated seedlings, leaves, stems, roots, flowers, embryos, anthers, carpels and ovules.

Its subcellular location is the endoplasmic reticulum membrane. The catalysed reaction is ATP + protein L-histidine = ADP + protein N-phospho-L-histidine.. In terms of biological role, ethylene receptor related to bacterial two-component regulators. Acts as a redundant negative regulator of ethylene signaling. The sequence is that of Ethylene response sensor 1 (ERS1) from Arabidopsis thaliana (Mouse-ear cress).